The following is a 231-amino-acid chain: Orotidine 5'-phosphate decarboxylase (231 aa).

Substrate-binding positions include Asp9, Lys34, 62–71 (DLKLHDIPSV), Thr117, Arg179, Gln188, Gly208, and Arg209. Lys64 functions as the Proton donor in the catalytic mechanism.

It belongs to the OMP decarboxylase family. Type 1 subfamily. As to quaternary structure, homodimer.

The enzyme catalyses orotidine 5'-phosphate + H(+) = UMP + CO2. It functions in the pathway pyrimidine metabolism; UMP biosynthesis via de novo pathway; UMP from orotate: step 2/2. In terms of biological role, catalyzes the decarboxylation of orotidine 5'-monophosphate (OMP) to uridine 5'-monophosphate (UMP). This is Orotidine 5'-phosphate decarboxylase from Aquifex aeolicus (strain VF5).